A 416-amino-acid chain; its full sequence is Ribulose bisphosphate carboxylase large chain (416 aa).

Lys-5 is modified (N6,N6,N6-trimethyllysine). Substrate contacts are provided by Asn-114 and Thr-164. Lys-166 (proton acceptor) is an active-site residue. Lys-168 contributes to the substrate binding site. Residues Lys-192, Asp-194, and Glu-195 each contribute to the Mg(2+) site. The residue at position 192 (Lys-192) is an N6-carboxylysine. His-285 (proton acceptor) is an active-site residue. 3 residues coordinate substrate: Arg-286, His-318, and Ser-370.

The protein belongs to the RuBisCO large chain family. Type I subfamily. As to quaternary structure, heterohexadecamer of 8 large chains and 8 small chains; disulfide-linked. The disulfide link is formed within the large subunit homodimers. Requires Mg(2+) as cofactor. The disulfide bond which can form in the large chain dimeric partners within the hexadecamer appears to be associated with oxidative stress and protein turnover.

Its subcellular location is the plastid. The protein resides in the chloroplast. It catalyses the reaction 2 (2R)-3-phosphoglycerate + 2 H(+) = D-ribulose 1,5-bisphosphate + CO2 + H2O. The catalysed reaction is D-ribulose 1,5-bisphosphate + O2 = 2-phosphoglycolate + (2R)-3-phosphoglycerate + 2 H(+). Its function is as follows. RuBisCO catalyzes two reactions: the carboxylation of D-ribulose 1,5-bisphosphate, the primary event in carbon dioxide fixation, as well as the oxidative fragmentation of the pentose substrate in the photorespiration process. Both reactions occur simultaneously and in competition at the same active site. The polypeptide is Ribulose bisphosphate carboxylase large chain (rbcL) (Spigelia marilandica (Woodland pinkroot)).